Consider the following 422-residue polypeptide: Dihydrofolate synthase/folylpolyglutamate synthase (422 aa).

29–31 (DLG) is a binding site for 7,8-dihydropteroate. ATP is bound at residue 59-62 (GKGT). A Mg(2+)-binding site is contributed by Ser-83. Position 122 to 125 (122 to 125 (TYFE)) interacts with 7,8-dihydropteroate. Residue Glu-146 coordinates Mg(2+). Residue 153–155 (LDA) participates in 7,8-dihydropteroate binding. Mg(2+) is bound at residue His-173. At Lys-188 the chain carries N6-carboxylysine. Residues Asn-257, Arg-289, and Asp-302 each contribute to the ATP site.

It belongs to the folylpolyglutamate synthase family. In terms of assembly, monomer. The cofactor is Mg(2+).

It catalyses the reaction 7,8-dihydropteroate + L-glutamate + ATP = 7,8-dihydrofolate + ADP + phosphate + H(+). The enzyme catalyses (6S)-5,6,7,8-tetrahydrofolyl-(gamma-L-Glu)(n) + L-glutamate + ATP = (6S)-5,6,7,8-tetrahydrofolyl-(gamma-L-Glu)(n+1) + ADP + phosphate + H(+). It carries out the reaction 10-formyltetrahydrofolyl-(gamma-L-Glu)(n) + L-glutamate + ATP = 10-formyltetrahydrofolyl-(gamma-L-Glu)(n+1) + ADP + phosphate + H(+). The catalysed reaction is (6R)-5,10-methylenetetrahydrofolyl-(gamma-L-Glu)(n) + L-glutamate + ATP = (6R)-5,10-methylenetetrahydrofolyl-(gamma-L-Glu)(n+1) + ADP + phosphate + H(+). It participates in cofactor biosynthesis; tetrahydrofolate biosynthesis; 7,8-dihydrofolate from 2-amino-4-hydroxy-6-hydroxymethyl-7,8-dihydropteridine diphosphate and 4-aminobenzoate: step 2/2. Its pathway is cofactor biosynthesis; tetrahydrofolylpolyglutamate biosynthesis. Functions in two distinct reactions of the de novo folate biosynthetic pathway. Catalyzes the addition of a glutamate residue to dihydropteroate (7,8-dihydropteroate or H2Pte) to form dihydrofolate (7,8-dihydrofolate monoglutamate or H2Pte-Glu). Also catalyzes successive additions of L-glutamate to tetrahydrofolate or 10-formyltetrahydrofolate or 5,10-methylenetetrahydrofolate, leading to folylpolyglutamate derivatives. The sequence is that of Dihydrofolate synthase/folylpolyglutamate synthase from Escherichia coli (strain K12).